We begin with the raw amino-acid sequence, 517 residues long: Ribonuclease Y (517 aa).

Residues 1 to 21 traverse the membrane as a helical segment; it reads MIESLIALIAAIVGLGIGYLV. The region spanning 207-273 is the KH domain; it reads LINVINIKND…TKVIELLVED (67 aa). The HD domain maps to 333–426; sequence ALAHSLEVAH…VCAADTLSAA (94 aa).

This sequence belongs to the RNase Y family.

The protein localises to the cell membrane. Endoribonuclease that initiates mRNA decay. The chain is Ribonuclease Y from Campylobacter jejuni subsp. doylei (strain ATCC BAA-1458 / RM4099 / 269.97).